Consider the following 134-residue polypeptide: Lymphocyte antigen 6G (134 aa).

Residues 1 to 26 (MDTCHIAKSCVLILLVVLLCAERAQG) form the signal peptide. A UPAR/Ly6 domain is found at 27–118 (LECYNCIGVP…PTGGSSWTMA (92 aa)). Disulfide bonds link C29-C53, C32-C41, C46-C74, C78-C98, and C99-C104. N105 carries the GPI-anchor amidated asparagine lipid modification. A propeptide spans 106–134 (AAVPTGGSSWTMAGVLLFSLVSVLLQTFL) (removed in mature form).

As to expression, expressed in bone marrow.

The protein resides in the cell membrane. The polypeptide is Lymphocyte antigen 6G (Ly6g) (Mus musculus (Mouse)).